The sequence spans 236 residues: Enolase-phosphatase E1 (236 aa).

The protein belongs to the HAD-like hydrolase superfamily. MasA/MtnC family. Monomer. Requires Mg(2+) as cofactor.

The catalysed reaction is 5-methylsulfanyl-2,3-dioxopentyl phosphate + H2O = 1,2-dihydroxy-5-(methylsulfanyl)pent-1-en-3-one + phosphate. It participates in amino-acid biosynthesis; L-methionine biosynthesis via salvage pathway; L-methionine from S-methyl-5-thio-alpha-D-ribose 1-phosphate: step 3/6. It functions in the pathway amino-acid biosynthesis; L-methionine biosynthesis via salvage pathway; L-methionine from S-methyl-5-thio-alpha-D-ribose 1-phosphate: step 4/6. Its function is as follows. Bifunctional enzyme that catalyzes the enolization of 2,3-diketo-5-methylthiopentyl-1-phosphate (DK-MTP-1-P) into the intermediate 2-hydroxy-3-keto-5-methylthiopentenyl-1-phosphate (HK-MTPenyl-1-P), which is then dephosphorylated to form the acireductone 1,2-dihydroxy-3-keto-5-methylthiopentene (DHK-MTPene). The protein is Enolase-phosphatase E1 of Frankia alni (strain DSM 45986 / CECT 9034 / ACN14a).